The following is a 507-amino-acid chain: Histidine ammonia-lyase (507 aa).

The segment at residues 141–143 is a cross-link (5-imidazolinone (Ala-Gly)); it reads ASG. At Ser142 the chain carries 2,3-didehydroalanine (Ser).

This sequence belongs to the PAL/histidase family. Post-translationally, contains an active site 4-methylidene-imidazol-5-one (MIO), which is formed autocatalytically by cyclization and dehydration of residues Ala-Ser-Gly.

It is found in the cytoplasm. The enzyme catalyses L-histidine = trans-urocanate + NH4(+). It participates in amino-acid degradation; L-histidine degradation into L-glutamate; N-formimidoyl-L-glutamate from L-histidine: step 1/3. The sequence is that of Histidine ammonia-lyase from Burkholderia mallei (strain NCTC 10247).